We begin with the raw amino-acid sequence, 337 residues long: MEDFSLDGNHGHVPVMRDRMAALIAEHVEALGENAVIVDATLGAGGHAEFFLNTFPKARLIGLDRDQNALRDARARLAPFGERFIGVQTRFDGLREVLESVEGDIIDLAREHGIAGALFDLGVSSMQLDQVERGFAYRTDAPLDMRMDATQGITAADILNTYSHGDIARILKTYGDERFAGKIASAVLKEREKEPFTTSARLVELLYDAIPAATRRTGGHPAKRTFQALRVEVNNELDSLKNVLPQITDALNVGGRAVFMSYQSHEDKLVKKFFTDLTTSKTPPGLPVDLPGTAPQFKQVTRGAETASEAEIEENPRAAPVKVRAIERIGNNSGDLS.

S-adenosyl-L-methionine-binding positions include 45 to 47, aspartate 64, phenylalanine 91, aspartate 120, and glutamine 127; that span reads GGH.

Belongs to the methyltransferase superfamily. RsmH family.

It is found in the cytoplasm. The enzyme catalyses cytidine(1402) in 16S rRNA + S-adenosyl-L-methionine = N(4)-methylcytidine(1402) in 16S rRNA + S-adenosyl-L-homocysteine + H(+). Specifically methylates the N4 position of cytidine in position 1402 (C1402) of 16S rRNA. This Corynebacterium glutamicum (strain ATCC 13032 / DSM 20300 / JCM 1318 / BCRC 11384 / CCUG 27702 / LMG 3730 / NBRC 12168 / NCIMB 10025 / NRRL B-2784 / 534) protein is Ribosomal RNA small subunit methyltransferase H.